A 168-amino-acid polypeptide reads, in one-letter code: Ribosome maturation factor RimP (168 aa).

This sequence belongs to the RimP family.

Its subcellular location is the cytoplasm. Functionally, required for maturation of 30S ribosomal subunits. This Bordetella bronchiseptica (strain ATCC BAA-588 / NCTC 13252 / RB50) (Alcaligenes bronchisepticus) protein is Ribosome maturation factor RimP.